The chain runs to 489 residues: Hyaluronoglucuronidase (489 aa).

Glutamate 176 functions as the Proton donor in the catalytic mechanism. Glutamate 290 serves as the catalytic Nucleophile.

It belongs to the glycosyl hydrolase 79 family.

It catalyses the reaction Random hydrolysis of (1-&gt;3)-linkages between beta-D-glucuronate and N-acetyl-D-glucosamine residues in hyaluronate.. Its activity is regulated as follows. Hyaluronidase activity is inhibited by Mn(2+), Cu(2+) and Fe(3+). In terms of biological role, hyaluronidase that mediates hydrolysis of (1-&gt;3)-linkages between beta-D-glucuronate and N-acetyl-D-glucosamine residues in hyaluronate. Very specific to hyaluronate: not able to hydrolyze chitin, heparin or chondroitin sulfate. The chain is Hyaluronoglucuronidase from Hirudo nipponia (Korean blood-sucking leech).